A 142-amino-acid polypeptide reads, in one-letter code: Small ribosomal subunit protein uS12 (142 aa).

This sequence belongs to the universal ribosomal protein uS12 family. As to quaternary structure, part of the 30S ribosomal subunit.

With S4 and S5 plays an important role in translational accuracy. Located at the interface of the 30S and 50S subunits. The sequence is that of Small ribosomal subunit protein uS12 from Methanocorpusculum labreanum (strain ATCC 43576 / DSM 4855 / Z).